Reading from the N-terminus, the 737-residue chain is Photosystem I P700 chlorophyll a apoprotein A2 (737 aa).

8 helical membrane passes run 46 to 69, 135 to 158, 175 to 199, 273 to 291, 333 to 356, 372 to 398, 420 to 442, and 520 to 538; these read LFST…FHIA, LYQG…LHLQ, LNHH…HVAI, IAHH…GHMY, LHFQ…QHMY, AALY…IFFI, AIIS…LYVH, and FLVH…LILV. [4Fe-4S] cluster-binding residues include Cys562 and Cys571. The next 2 helical transmembrane spans lie at 578–599 and 646–668; these read AFYL…YWHW and LAVW…MFLI. 3 residues coordinate chlorophyll a: His657, Met665, and Tyr673. Position 674 (Trp674) interacts with phylloquinone. A helical membrane pass occupies residues 710–730; the sequence is VVGLAHFSVGYVLTYAAFLIA.

Belongs to the PsaA/PsaB family. In terms of assembly, the PsaA/B heterodimer binds the P700 chlorophyll special pair and subsequent electron acceptors. PSI consists of a core antenna complex that captures photons, and an electron transfer chain that converts photonic excitation into a charge separation. The cyanobacterial PSI reaction center is composed of one copy each of PsaA,B,C,D,E,F,I,J,K,L,M and X, and forms trimeric complexes. Requires PSI electron transfer chain: 5 chlorophyll a, 1 chlorophyll a', 2 phylloquinones and 3 4Fe-4S clusters. PSI core antenna: 90 chlorophyll a, 22 carotenoids, 3 phospholipids and 1 galactolipid. P700 is a chlorophyll a/chlorophyll a' dimer, A0 is one or more chlorophyll a, A1 is one or both phylloquinones and FX is a shared 4Fe-4S iron-sulfur center. as cofactor.

It is found in the cellular thylakoid membrane. It carries out the reaction reduced [plastocyanin] + hnu + oxidized [2Fe-2S]-[ferredoxin] = oxidized [plastocyanin] + reduced [2Fe-2S]-[ferredoxin]. PsaA and PsaB bind P700, the primary electron donor of photosystem I (PSI), as well as the electron acceptors A0, A1 and FX. PSI is a plastocyanin/cytochrome c6-ferredoxin oxidoreductase, converting photonic excitation into a charge separation, which transfers an electron from the donor P700 chlorophyll pair to the spectroscopically characterized acceptors A0, A1, FX, FA and FB in turn. Oxidized P700 is reduced on the lumenal side of the thylakoid membrane by plastocyanin or cytochrome c6. The protein is Photosystem I P700 chlorophyll a apoprotein A2 of Parasynechococcus marenigrum (strain WH8102).